We begin with the raw amino-acid sequence, 154 residues long: 2S sulfur-rich seed storage protein 2 (154 aa).

The signal sequence occupies residues 1-22 (MAKMSVVAAALLALLVLGQATA). Residues 29-52 (TTLEEEQEENPRGRSEQQCREQME) are disordered. Positions 37–52 (ENPRGRSEQQCREQME) are enriched in basic and acidic residues. Intrachain disulfides connect cysteine 47/cysteine 101, cysteine 60/cysteine 90, cysteine 91/cysteine 138, and cysteine 103/cysteine 145. Residues 72 to 76 (PYQNP) constitute a propeptide that is removed on maturation. Positions 151 to 154 (TAWL) are excised as a propeptide.

It belongs to the 2S seed storage albumins family. The mature protein consists of a small and a large chain linked by disulfide bonds.

In terms of biological role, this is a 2S seed storage protein. The chain is 2S sulfur-rich seed storage protein 2 (BE2S2) from Bertholletia excelsa (Brazil nut).